The primary structure comprises 378 residues: Chaperone protein DnaJ (378 aa).

One can recognise a J domain in the interval 5–70 (DYYQILGIPK…EKRTAYDQYG (66 aa)). The CR-type zinc finger occupies 133–211 (GTTKEIRIPT…CRGQGRIKTN (79 aa)). Positions 146, 149, 163, 166, 185, 188, 199, and 202 each coordinate Zn(2+). CXXCXGXG motif repeat units follow at residues 146–153 (CKTCYGMG), 163–170 (CSTCHGKG), 185–192 (CPTCNGIG), and 199–206 (CRMCRGQG).

It belongs to the DnaJ family. In terms of assembly, homodimer. Zn(2+) is required as a cofactor.

The protein resides in the cytoplasm. Participates actively in the response to hyperosmotic and heat shock by preventing the aggregation of stress-denatured proteins and by disaggregating proteins, also in an autonomous, DnaK-independent fashion. Unfolded proteins bind initially to DnaJ; upon interaction with the DnaJ-bound protein, DnaK hydrolyzes its bound ATP, resulting in the formation of a stable complex. GrpE releases ADP from DnaK; ATP binding to DnaK triggers the release of the substrate protein, thus completing the reaction cycle. Several rounds of ATP-dependent interactions between DnaJ, DnaK and GrpE are required for fully efficient folding. Also involved, together with DnaK and GrpE, in the DNA replication of plasmids through activation of initiation proteins. The polypeptide is Chaperone protein DnaJ (Buchnera aphidicola subsp. Schizaphis graminum (strain Sg)).